The primary structure comprises 93 residues: Small ribosomal subunit protein uS19 (93 aa).

This sequence belongs to the universal ribosomal protein uS19 family.

Its function is as follows. Protein S19 forms a complex with S13 that binds strongly to the 16S ribosomal RNA. This is Small ribosomal subunit protein uS19 from Paenarthrobacter aurescens (strain TC1).